Reading from the N-terminus, the 283-residue chain is Homeobox protein Hox-A9a (283 aa).

Disordered stretches follow at residues 25–54 (VPRYSAGPGHQHSRQPASIGDPHSELGTCS) and 162–181 (EKDAVSSHTGDGVDTEEKPG). Positions 216–275 (TRKKRCPYTKHQILELEKEFLFNTYLTRDRRYEVARLLNLTERQVKIWFQNRRMKMKKFN) form a DNA-binding region, homeobox.

This sequence belongs to the Abd-B homeobox family.

The protein localises to the nucleus. In terms of biological role, sequence-specific transcription factor which is part of a developmental regulatory system that provides cells with specific positional identities on the anterior-posterior axis. The polypeptide is Homeobox protein Hox-A9a (hoxa9a) (Takifugu rubripes (Japanese pufferfish)).